The sequence spans 594 residues: DNA polymerase II small subunit (594 aa).

This sequence belongs to the DNA polymerase delta/II small subunit family. In terms of assembly, heterodimer of a large subunit and a small subunit.

The catalysed reaction is DNA(n) + a 2'-deoxyribonucleoside 5'-triphosphate = DNA(n+1) + diphosphate. It catalyses the reaction Exonucleolytic cleavage in the 3'- to 5'-direction to yield nucleoside 5'-phosphates.. Possesses two activities: a DNA synthesis (polymerase) and an exonucleolytic activity that degrades single-stranded DNA in the 3' to 5' direction. Has a template-primer preference which is characteristic of a replicative DNA polymerase. This Methanocaldococcus jannaschii (strain ATCC 43067 / DSM 2661 / JAL-1 / JCM 10045 / NBRC 100440) (Methanococcus jannaschii) protein is DNA polymerase II small subunit (polB).